The following is a 187-amino-acid chain: ATP synthase subunit delta (187 aa).

The protein belongs to the ATPase delta chain family. F-type ATPases have 2 components, F(1) - the catalytic core - and F(0) - the membrane proton channel. F(1) has five subunits: alpha(3), beta(3), gamma(1), delta(1), epsilon(1). F(0) has three main subunits: a(1), b(2) and c(10-14). The alpha and beta chains form an alternating ring which encloses part of the gamma chain. F(1) is attached to F(0) by a central stalk formed by the gamma and epsilon chains, while a peripheral stalk is formed by the delta and b chains.

Its subcellular location is the cell membrane. Its function is as follows. F(1)F(0) ATP synthase produces ATP from ADP in the presence of a proton or sodium gradient. F-type ATPases consist of two structural domains, F(1) containing the extramembraneous catalytic core and F(0) containing the membrane proton channel, linked together by a central stalk and a peripheral stalk. During catalysis, ATP synthesis in the catalytic domain of F(1) is coupled via a rotary mechanism of the central stalk subunits to proton translocation. Functionally, this protein is part of the stalk that links CF(0) to CF(1). It either transmits conformational changes from CF(0) to CF(1) or is implicated in proton conduction. This is ATP synthase subunit delta from Mesomycoplasma hyopneumoniae (strain 7448) (Mycoplasma hyopneumoniae).